The chain runs to 123 residues: WAP four-disulfide core domain protein 5 (123 aa).

Residues 1 to 24 form the signal peptide; it reads MRIQSLLLLGALLAVGSQLPAVFG. WAP domains are found at residues 27–73 and 74–121; these read KGEK…CIPR and VSVK…RDPA. 8 cysteine pairs are disulfide-bonded: C34/C62, C41/C66, C49/C61, C55/C70, C81/C109, C88/C113, C96/C108, and C102/C117.

The protein resides in the secreted. Its function is as follows. Putative acid-stable proteinase inhibitor. This chain is WAP four-disulfide core domain protein 5 (WFDC5), found in Macaca mulatta (Rhesus macaque).